A 463-amino-acid chain; its full sequence is Dipeptidyl peptidase 1 (463 aa).

Residues 1 to 24 (MGPWSGSRLVALLLLVYGAGSVRG) form the signal peptide. Asn-29 and Asn-53 each carry an N-linked (GlcNAc...) asparagine glycan. Cystine bridges form between Cys-30–Cys-118 and Cys-54–Cys-136. A propeptide spanning residues 135–230 (ACFTGRKTGN…TAEIQKKILH (96 aa)) is cleaved from the precursor. N-linked (GlcNAc...) asparagine glycosylation occurs at Asn-144. 3 disulfides stabilise this stretch: Cys-255-Cys-298, Cys-291-Cys-331, and Cys-321-Cys-337. The active site involves Cys-258. Asn-276 carries N-linked (GlcNAc...) asparagine glycosylation. Positions 302 and 304 each coordinate chloride. Tyr-347 is a chloride binding site. Catalysis depends on residues His-405 and Asn-427.

The protein belongs to the peptidase C1 family. In terms of assembly, tetramer of heterotrimers consisting of exclusion domain, heavy- and light chains. It depends on chloride as a cofactor.

Its subcellular location is the lysosome. The catalysed reaction is Release of an N-terminal dipeptide, Xaa-Yaa-|-Zaa-, except when Xaa is Arg or Lys, or Yaa or Zaa is Pro.. Thiol protease. Has dipeptidylpeptidase activity. Active against a broad range of dipeptide substrates composed of both polar and hydrophobic amino acids. Proline cannot occupy the P1 position and arginine cannot occupy the P2 position of the substrate. Can act as both an exopeptidase and endopeptidase. Activates serine proteases such as elastase, cathepsin G and granzymes A and B. The sequence is that of Dipeptidyl peptidase 1 (CTSC) from Bos taurus (Bovine).